The following is a 275-amino-acid chain: Diaminopimelate epimerase (275 aa).

Asparagine 13, glutamine 46, and asparagine 66 together coordinate substrate. Cysteine 75 acts as the Proton donor in catalysis. Substrate is bound by residues 76 to 77 (GN), asparagine 159, asparagine 192, and 210 to 211 (ER). The active-site Proton acceptor is the cysteine 219. Residue 220 to 221 (GS) coordinates substrate.

Belongs to the diaminopimelate epimerase family. In terms of assembly, homodimer.

It localises to the cytoplasm. It catalyses the reaction (2S,6S)-2,6-diaminopimelate = meso-2,6-diaminopimelate. It functions in the pathway amino-acid biosynthesis; L-lysine biosynthesis via DAP pathway; DL-2,6-diaminopimelate from LL-2,6-diaminopimelate: step 1/1. Catalyzes the stereoinversion of LL-2,6-diaminopimelate (L,L-DAP) to meso-diaminopimelate (meso-DAP), a precursor of L-lysine and an essential component of the bacterial peptidoglycan. This Idiomarina loihiensis (strain ATCC BAA-735 / DSM 15497 / L2-TR) protein is Diaminopimelate epimerase.